The sequence spans 314 residues: DNA-directed RNA polymerase subunit alpha (314 aa).

The alpha N-terminal domain (alpha-NTD) stretch occupies residues 1–228; it reads MIEIEKPKIE…EHLNIFVGLT (228 aa). The alpha C-terminal domain (alpha-CTD) stretch occupies residues 245-314; the sequence is KEKVLEMTIE…ELGLGLRKDD (70 aa).

The protein belongs to the RNA polymerase alpha chain family. As to quaternary structure, homodimer. RNAP is composed of a core of 2 alpha, a beta and a beta' subunit. The core is associated with a delta subunit, and at least one of epsilon or omega. When a sigma factor is associated with the core the holoenzyme is formed, which can initiate transcription.

The catalysed reaction is RNA(n) + a ribonucleoside 5'-triphosphate = RNA(n+1) + diphosphate. In terms of biological role, DNA-dependent RNA polymerase catalyzes the transcription of DNA into RNA using the four ribonucleoside triphosphates as substrates. In Bacillus subtilis (strain 168), this protein is DNA-directed RNA polymerase subunit alpha.